The sequence spans 111 residues: Universal stress protein B (111 aa).

The next 2 membrane-spanning stretches (helical) occupy residues 1–21 (MIST…NMAR) and 90–110 (FILT…LILW).

The protein belongs to the universal stress protein B family.

It localises to the cell inner membrane. This Yersinia enterocolitica serotype O:8 / biotype 1B (strain NCTC 13174 / 8081) protein is Universal stress protein B.